Consider the following 275-residue polypeptide: Calcium-binding protein 4 (275 aa).

Positions 1 to 12 (MTTEQARGQQGP) are enriched in polar residues. The tract at residues 1–112 (MTTEQARGQQ…SLHDAAQRTY (112 aa)) is disordered. Basic residues predominate over residues 38 to 55 (TRKRSKKERGLRGSRKRT). Residue Ser-42 is modified to Phosphoserine. EF-hand domains lie at 129–164 (EELDELQAAFEEFDTDRDGYISHRELGDCMRTLGYM), 183–200 (GRVDFEEFVELIGPKLRE), 206–241 (LGVRELRIAFREFDRDRDGRITVAELREAVPALLGE), and 243–275 (LAGPELDEMLREVDLNGDGTVDFDEFVMMLSRH). Asp-142, Asp-144, Asp-146, Tyr-148, and Glu-153 together coordinate Ca(2+). Positions 219, 221, 223, 225, 230, 256, 258, 260, 262, and 267 each coordinate Ca(2+).

Interacts with CACNA1F and CACNA1D (via IQ domain) in a calcium independent manner. Interacts (via N-terminus) with UNC119. Post-translationally, phosphorylated. Phosphorylation levels change with the light conditions and regulate the activity. In terms of tissue distribution, expressed in retina and in the inner hair cells (IHC) of the cochlea.

The protein localises to the cytoplasm. Its subcellular location is the presynapse. Functionally, involved in normal synaptic function through regulation of Ca(2+) influx and neurotransmitter release in photoreceptor synaptic terminals and in auditory transmission. Modulator of CACNA1D and CACNA1F, suppressing the calcium-dependent inactivation and shifting the activation range to more hyperpolarized voltages. The protein is Calcium-binding protein 4 (CABP4) of Homo sapiens (Human).